The chain runs to 433 residues: MHDLKAIRDDAAAFGAAMRRRGLAGPEGADEGAAAPIRALDEERRRAQTELQGHETRRNELARAIGQAKRAGEDTTALEAEGTALRQSIETANAWLAESARKLDELLAVLPNVLDADVPDGPDETANVEQKRVGAPPSFDFEARQHFELGEALGLMDFAGAAKLAGARFTVLRGDLARLERALGQFMLDLHVNEHGYTEVSPPLLVNDATMYGTGQLPKFAEDLFRTTDGRWLIPTAEVPLTNLAAGEILDAASLPLRMTALTPSFRSEAGSAGRDTRGMLRQHQFWKVELVSLTTPEASADEHERMTSCAESVLERLGLPYRRMLLCAGDTGFSSAKTYDLEVWLPGQGAYREISSCSNCRAFQARRMNARYRPPQTGPKPAKPDFVHTLNGSGVATGRALIAVMENYQNADGSITVPDALRPYMRGCDRIG.

Residue 236–238 (TAE) coordinates L-serine. Residue 267 to 269 (RSE) participates in ATP binding. Position 290 (glutamate 290) interacts with L-serine. An ATP-binding site is contributed by 354–357 (EISS). Serine 394 contacts L-serine.

Belongs to the class-II aminoacyl-tRNA synthetase family. Type-1 seryl-tRNA synthetase subfamily. Homodimer. The tRNA molecule binds across the dimer.

The protein resides in the cytoplasm. The enzyme catalyses tRNA(Ser) + L-serine + ATP = L-seryl-tRNA(Ser) + AMP + diphosphate + H(+). It catalyses the reaction tRNA(Sec) + L-serine + ATP = L-seryl-tRNA(Sec) + AMP + diphosphate + H(+). The protein operates within aminoacyl-tRNA biosynthesis; selenocysteinyl-tRNA(Sec) biosynthesis; L-seryl-tRNA(Sec) from L-serine and tRNA(Sec): step 1/1. Catalyzes the attachment of serine to tRNA(Ser). Is also able to aminoacylate tRNA(Sec) with serine, to form the misacylated tRNA L-seryl-tRNA(Sec), which will be further converted into selenocysteinyl-tRNA(Sec). The sequence is that of Serine--tRNA ligase from Acidiphilium cryptum (strain JF-5).